The following is a 342-amino-acid chain: Biotin synthase (342 aa).

The Radical SAM core domain maps to 63–290 (NTVQLSTLLS…GAMVRLSAGR (228 aa)). [4Fe-4S] cluster-binding residues include Cys-78, Cys-82, and Cys-85. [2Fe-2S] cluster-binding residues include Cys-122, Cys-153, Cys-213, and Arg-285.

Belongs to the radical SAM superfamily. Biotin synthase family. As to quaternary structure, homodimer. [4Fe-4S] cluster serves as cofactor. The cofactor is [2Fe-2S] cluster.

It carries out the reaction (4R,5S)-dethiobiotin + (sulfur carrier)-SH + 2 reduced [2Fe-2S]-[ferredoxin] + 2 S-adenosyl-L-methionine = (sulfur carrier)-H + biotin + 2 5'-deoxyadenosine + 2 L-methionine + 2 oxidized [2Fe-2S]-[ferredoxin]. Its pathway is cofactor biosynthesis; biotin biosynthesis; biotin from 7,8-diaminononanoate: step 2/2. Functionally, catalyzes the conversion of dethiobiotin (DTB) to biotin by the insertion of a sulfur atom into dethiobiotin via a radical-based mechanism. The protein is Biotin synthase of Cupriavidus pinatubonensis (strain JMP 134 / LMG 1197) (Cupriavidus necator (strain JMP 134)).